A 437-amino-acid chain; its full sequence is Carbonic anhydrase 9 (437 aa).

Positions 1–31 (MASLGPSPWAPLSTPAPTAQLLLFLLLQVSA) are cleaved as a signal peptide. Residues 32-95 (QPQGLSGMQG…RMEESLGLED (64 aa)) form a proteoglycan-like (PG) region. Residues 32–390 (QPQGLSGMQG…HVNSCFTAGD (359 aa)) are Extracellular-facing. The disordered stretch occupies residues 34–118 (QGLSGMQGEP…HGDEKGGGHS (85 aa)). Residues 50–79 (SGEDELGVDVLPSEEDAPEEADPPDGEDPP) are compositionally biased toward acidic residues. Residues 96–390 (LSTPEAPEHS…HVNSCFTAGD (295 aa)) are catalytic. An O-linked (GlcNAc...) threonine glycan is attached at Thr-98. The 252-residue stretch at 118 to 369 (SHWSYGGTLL…LNGRTIEASF (252 aa)) folds into the Alpha-carbonic anhydrase domain. The cysteines at positions 135 and 315 are disulfide-linked. Residue His-179 is the Proton donor/acceptor of the active site. Positions 205, 207, and 230 each coordinate Zn(2+). 311–312 (TT) is a binding site for substrate. Asn-325 is a glycosylation site (N-linked (GlcNAc...) asparagine). A helical membrane pass occupies residues 391-411 (ILALVFGLLFAVTSIAFLLQL). Residues 412–437 (RRQHRHRSGTKDRVSYSPAEMTETGA) are Cytoplasmic-facing. Phosphotyrosine is present on Tyr-427.

This sequence belongs to the alpha-carbonic anhydrase family. As to quaternary structure, forms oligomers linked by disulfide bonds. Zn(2+) is required as a cofactor. Asn-325 bears high-mannose type glycan structures.

Its subcellular location is the nucleus. The protein resides in the nucleolus. The protein localises to the cell membrane. It localises to the cell projection. It is found in the microvillus membrane. The catalysed reaction is hydrogencarbonate + H(+) = CO2 + H2O. With respect to regulation, inhibited by acetazolamide. In terms of biological role, catalyzes the interconversion between carbon dioxide and water and the dissociated ions of carbonic acid (i.e. bicarbonate and hydrogen ions). In Mus musculus (Mouse), this protein is Carbonic anhydrase 9 (Ca9).